Consider the following 864-residue polypeptide: Leucine--tRNA ligase (864 aa).

The 'HIGH' region motif lies at 42–52 (PYPSGKLHMGH). Positions 624-628 (KMSKS) match the 'KMSKS' region motif. K627 contributes to the ATP binding site.

Belongs to the class-I aminoacyl-tRNA synthetase family.

Its subcellular location is the cytoplasm. It catalyses the reaction tRNA(Leu) + L-leucine + ATP = L-leucyl-tRNA(Leu) + AMP + diphosphate. In Burkholderia mallei (strain ATCC 23344), this protein is Leucine--tRNA ligase.